The primary structure comprises 417 residues: NADH-quinone oxidoreductase subunit D (417 aa).

Belongs to the complex I 49 kDa subunit family. NDH-1 is composed of 14 different subunits. Subunits NuoB, C, D, E, F, and G constitute the peripheral sector of the complex.

Its subcellular location is the cell inner membrane. The enzyme catalyses a quinone + NADH + 5 H(+)(in) = a quinol + NAD(+) + 4 H(+)(out). Functionally, NDH-1 shuttles electrons from NADH, via FMN and iron-sulfur (Fe-S) centers, to quinones in the respiratory chain. The immediate electron acceptor for the enzyme in this species is believed to be ubiquinone. Couples the redox reaction to proton translocation (for every two electrons transferred, four hydrogen ions are translocated across the cytoplasmic membrane), and thus conserves the redox energy in a proton gradient. This Herminiimonas arsenicoxydans protein is NADH-quinone oxidoreductase subunit D.